The sequence spans 629 residues: Glycerol-3-phosphate dehydrogenase SDP6, mitochondrial (629 aa).

The transit peptide at methionine 1–leucine 48 directs the protein to the mitochondrion. Aspartate 75–glutamate 103 is an FAD binding site.

This sequence belongs to the FAD-dependent glycerol-3-phosphate dehydrogenase family. It depends on FAD as a cofactor. As to expression, expressed in germinating seedlings. Also detected in roots, leaves, flowers, developing siliques and germinating seeds.

The protein resides in the mitochondrion inner membrane. It catalyses the reaction a quinone + sn-glycerol 3-phosphate = dihydroxyacetone phosphate + a quinol. It participates in polyol metabolism; glycerol degradation via glycerol kinase pathway; glycerone phosphate from sn-glycerol 3-phosphate (anaerobic route): step 1/1. In terms of biological role, required for glycerol catabolism and involved in NADH/NAD(+) homeostasis. Essential for postgerminative growth and seedling establishment. This Arabidopsis thaliana (Mouse-ear cress) protein is Glycerol-3-phosphate dehydrogenase SDP6, mitochondrial.